A 565-amino-acid chain; its full sequence is MVAEDAPVRGTCRVLFRTTTLIFLCTLLALSISILYESLIIRKQIMSQAGSTGSNFRLGSITDLLNNILSVANQIIYNSAVALPLQLDTLESTLLTAIKSLQTSDKLEQNCSWGAALINDNRYINGINQFYFSIAEGRNLTLGPLLNIPSFIPTATTPEGCTRIPSFSLTKTHWCYTHNVILNGCQDHVSSNQFVSMGIIEPTSAGFPSFRTLKTLYLSDGVNRKSCSISTVPGGCMMYCFVSTQPERDDYLSTAPPEQRIIIMYYNDTIVERIINPPGVLDVWATLNPGTGSGVYYLGWVLFPTYGGVIKDTSLWNNQANKYFIPQMVAALCSQNQATQVQNAKSSYYSSWFGNRMIQSGILACPLQQDLTNECLILPFSNDQVLMGAEGRLYMYGDSVYYYQRSNSWWPMTMLYKVTITFTNGQPSAISAQNVPTQQVPRPGTGDCSATNRCPGFCLKGVYADAWLLTNPSSTSTFGSEATFTGSYLNAATQRINPTMYIANNTQIISSQQFGSSGQEAAYGHTTCFRDTGSVMVYCIYIIELSSSLLGQFQIVPFIRQVTLS.

Residues Met-1 to Thr-20 are Intravirion-facing. A helical transmembrane segment spans residues Leu-21–Ile-41. The Virion surface segment spans residues Arg-42–Ser-565. N-linked (GlcNAc...) asparagine; by host glycans are attached at residues Asn-110 and Asn-139. Intrachain disulfides connect Cys-161/Cys-185, Cys-175/Cys-236, and Cys-227/Cys-240. Residues Asn-223–Ser-228 are involved in neuraminidase activity. Asn-267 carries an N-linked (GlcNAc...) asparagine; by host glycan. 3 cysteine pairs are disulfide-bonded: Cys-333/Cys-454, Cys-365/Cys-375, and Cys-448/Cys-458. Asn-504 carries N-linked (GlcNAc...) asparagine; by host glycosylation. A disulfide bond links Cys-528 and Cys-539.

This sequence belongs to the paramyxoviruses hemagglutinin-neuraminidase family. In terms of assembly, homotetramer; composed of disulfide-linked homodimers. Interacts with F protein trimer.

It localises to the virion membrane. The protein localises to the host cell membrane. It carries out the reaction Hydrolysis of alpha-(2-&gt;3)-, alpha-(2-&gt;6)-, alpha-(2-&gt;8)- glycosidic linkages of terminal sialic acid residues in oligosaccharides, glycoproteins, glycolipids, colominic acid and synthetic substrates.. Functionally, attaches the virus to sialic acid-containing cell receptors and thereby initiating infection. Binding of HN protein to the receptor induces a conformational change that allows the F protein to trigger virion/cell membranes fusion. In terms of biological role, neuraminidase activity ensures the efficient spread of the virus by dissociating the mature virions from the neuraminic acid containing glycoproteins. The protein is Hemagglutinin-neuraminidase (HN) of Canis lupus familiaris (Dog).